Reading from the N-terminus, the 1044-residue chain is Ras GTPase-activating protein 1 (1044 aa).

Met-1 carries the post-translational modification N-acetylmethionine. The hydrophobic stretch occupies residues 1–160 (MMAAEAGGEE…DEGDSLDGPE (160 aa)). The SH2 1 domain maps to 178 to 269 (WYHGKLDRTI…LKGEKLLYPV (92 aa)). One can recognise an SH3 domain in the interval 276-338 (EDRRRVRAIL…VEDLVEEVGR (63 aa)). The 91-residue stretch at 348–438 (WFHGKISKQE…VEGYYLKEPV (91 aa)) folds into the SH2 2 domain. Residues 471-574 (NIVKKGYLLK…WMKGLQAFCN (104 aa)) form the PH domain. A C2 domain is found at 574 to 687 (NLRKSSPGTS…QKGHATDEWF (114 aa)). A Phosphotyrosine modification is found at Tyr-612. 2 repeats span residues 646-664 (PDIN…KSKD) and 665-683 (PDIL…GHAT). The region spanning 761–971 (KLESLLLCTL…HRMIMFLDEL (211 aa)) is the Ras-GAP domain. Ser-828 is subject to Phosphoserine.

In terms of assembly, interacts with SQSTM1. Interacts with SPSB1; the interaction does not promote degradation. Interacts with CAV2 (tyrosine phosphorylated form). Directly interacts with NCK1. Interacts with PDGFRB (tyrosine phosphorylated). Interacts (via SH2 domain) with the 'Tyr-9' phosphorylated form of PDPK1. Interacts with tyrosine-phosphorylated EPHB4. Post-translationally, phosphorylated by SRC and LCK. The phosphorylation SRC inhibits its ability to stimulate the Ras-GTPase activity, whereas phosphorylation by LCK does not display any effect on stimulation activity.

It localises to the cytoplasm. Functionally, inhibitory regulator of the Ras-cyclic AMP pathway. Stimulates the GTPase of normal but not oncogenic Ras p21. The chain is Ras GTPase-activating protein 1 (RASA1) from Bos taurus (Bovine).